We begin with the raw amino-acid sequence, 786 residues long: Endonuclease MutS2 (786 aa).

332–339 (GPNTGGKT) is an ATP binding site. The 76-residue stretch at 711-786 (VDLRGMDSIE…GTGVTIVELK (76 aa)) folds into the Smr domain.

Belongs to the DNA mismatch repair MutS family. MutS2 subfamily. Homodimer. Binds to stalled ribosomes, contacting rRNA.

Its function is as follows. Endonuclease that is involved in the suppression of homologous recombination and thus may have a key role in the control of bacterial genetic diversity. Acts as a ribosome collision sensor, splitting the ribosome into its 2 subunits. Detects stalled/collided 70S ribosomes which it binds and splits by an ATP-hydrolysis driven conformational change. Acts upstream of the ribosome quality control system (RQC), a ribosome-associated complex that mediates the extraction of incompletely synthesized nascent chains from stalled ribosomes and their subsequent degradation. Probably generates substrates for RQC. The sequence is that of Endonuclease MutS2 from Clostridium kluyveri (strain NBRC 12016).